Consider the following 213-residue polypeptide: MAIKVHGSPMSTATMRVAACLIEKDLDFELVPVDMVSGEHKKHPYLSLNPFGQVPAFEDGDLKLFESRAITQYIAHVYADNGYQLILQDPKKMPIMSVWMEVEGQKFEPHASKLTWELGIKPIIGMTTDDDAVKESEVQLSKVLDIYETRLAESKYLGGDSFTLVDLHHIPNIYYLMSTKVKEVFDSRPRVSAWCADILARPAWVKGLEKLQK.

Residues 1-82 (MAIKVHGSPM…YIAHVYADNG (82 aa)) form the GST N-terminal domain. Glutathione is bound by residues S11, 12-13 (TA), 40-41 (HK), 53-54 (QV), and 66-67 (ES). A GST C-terminal domain is found at 89–213 (DPKKMPIMSV…WVKGLEKLQK (125 aa)).

This sequence belongs to the GST superfamily. Phi family.

The catalysed reaction is RX + glutathione = an S-substituted glutathione + a halide anion + H(+). In terms of biological role, conjugation of reduced glutathione to a wide number of exogenous and endogenous hydrophobic electrophiles. In Nicotiana tabacum (Common tobacco), this protein is Glutathione S-transferase APIC.